We begin with the raw amino-acid sequence, 36 residues long: MFKPRVILLITIIAVFSEFKKAFKGLFEKAANKYLH.

The first 19 residues, 1–19 (MFKPRVILLITIIAVFSEF), serve as a signal peptide directing secretion.

This sequence belongs to the limacoditoxin-7 family. In terms of tissue distribution, expressed by the venom secretory cell of the spine. The spine is a cuticular structure containing a single large nucleated venom-secreting cell at its base. It is an independent unit capable of producing, storing and injecting venom. On the back of D.vulnerans caterpillars, spines are grouped together by 50 to 100 to form scoli, of which there are eight in D.vulnerans.

It is found in the secreted. Peptide with insecticidal and antiparasitic activities. Induces irreversible paralysis in D.melanogaster when tested at high doses. It shows a moderate antiparasitic activity against the major pathogenic nematode of ruminants (H.contortus, EC(50)=41.3 uM). Does not show antimicrobial activities. Does not induce increase in intracellular calcium in mouse DRG neurons, suggesting that it does not induce pain. This Doratifera vulnerans (Mottled cup moth) protein is U-limacoditoxin(7)-Dv63.